The primary structure comprises 220 residues: Protein CREG1 (220 aa).

The N-terminal stretch at 1–31 (MAGLSRGSARALLAALLASTLLALLVSPARG) is a signal peptide. Residues Asn160, Asn193, and Asn216 are each glycosylated (N-linked (GlcNAc...) asparagine).

It belongs to the CREG family. In terms of assembly, homodimer. Interacts with IGF2R; the interaction is dependent on glycosylation. N-glycosylated.

The protein resides in the secreted. Functionally, may contribute to the transcriptional control of cell growth and differentiation. Antagonizes transcriptional activation and cellular transformation by the adenovirus E1A protein. The transcriptional control activity of cell growth requires interaction with IGF2R. The sequence is that of Protein CREG1 (CREG1) from Homo sapiens (Human).